A 610-amino-acid chain; its full sequence is ATP-dependent zinc metalloprotease FtsH (610 aa).

Over 1-3 (MAK) the chain is Cytoplasmic. Residues 4–24 (NLMLWLVIAVVLMSIFQNFSA) traverse the membrane as a helical segment. The Extracellular segment spans residues 25–97 (NNINNRKIDY…IIGAAPEEQS (73 aa)). A helical membrane pass occupies residues 98 to 118 (FFTAIFISWFPMLLLIGVWVF). Over 119-610 (FMRQMQVGGG…SNICTDDDNN (492 aa)) the chain is Cytoplasmic. 192–199 (GPPGTGKT) contributes to the ATP binding site. Residue His414 coordinates Zn(2+). Residue Glu415 is part of the active site. Residues His418 and Asp492 each contribute to the Zn(2+) site.

This sequence in the central section; belongs to the AAA ATPase family. It in the C-terminal section; belongs to the peptidase M41 family. As to quaternary structure, homohexamer. The cofactor is Zn(2+).

The protein localises to the cell membrane. Acts as a processive, ATP-dependent zinc metallopeptidase for both cytoplasmic and membrane proteins. Plays a role in the quality control of integral membrane proteins. This Buchnera aphidicola subsp. Baizongia pistaciae (strain Bp) protein is ATP-dependent zinc metalloprotease FtsH.